A 215-amino-acid polypeptide reads, in one-letter code: Ceramide-1-phosphate transfer protein (215 aa).

Aspartate 57, lysine 61, arginine 107, arginine 111, and histidine 151 together coordinate an N-acylsphingoid base 1-phosphate.

This sequence belongs to the GLTP family.

The protein localises to the cytoplasm. It is found in the cytosol. Its subcellular location is the golgi apparatus. The protein resides in the trans-Golgi network membrane. It localises to the cell membrane. The protein localises to the endosome membrane. It is found in the nucleus outer membrane. The enzyme catalyses N-(hexadecanoyl)-sphing-4-enine-1-phosphate(in) = N-(hexadecanoyl)-sphing-4-enine-1-phosphate(out). The catalysed reaction is N-(9Z-octadecenoyl)-sphing-4-enine-1-phosphate(in) = N-(9Z-octadecenoyl)-sphing-4-enine-1-phosphate(out). In terms of biological role, mediates the intracellular transfer of ceramide-1-phosphate (C1P) between organelle membranes and the cell membrane. Required for normal structure of the Golgi stacks. Can bind phosphoceramides with a variety of aliphatic chains, but has a preference for lipids with saturated C16:0 or monounsaturated C18:1 aliphatic chains, and is inefficient with phosphoceramides containing lignoceryl (C24:0). Plays a role in the regulation of the cellular levels of ceramide-1-phosphate, and thereby contributes to the regulation of phospholipase PLA2G4A activity and the release of arachidonic acid. Has no activity with galactosylceramide, lactosylceramide, sphingomyelin, phosphatidylcholine, phosphatidic acid and ceramide. C1P transfer is stimulated by phosphatidylserine in C1P source vesicles. Regulates autophagy and pyroptosis, but not apoptosis. The protein is Ceramide-1-phosphate transfer protein (cptp) of Xenopus laevis (African clawed frog).